The sequence spans 54 residues: U-reduvitoxin-Pr1a (54 aa).

The N-terminal stretch at 1-19 (MKLLGLLLLVFTFMALAFA) is a signal peptide. 3 disulfides stabilise this stretch: Cys24–Cys39, Cys31–Cys44, and Cys38–Cys51.

It belongs to the venom Ptu1-like knottin family. As to expression, expressed by the venom gland (posterior main gland) (at protein level).

The protein localises to the secreted. In terms of biological role, binds reversibly and blocks P/Q-type voltage-gated calcium channels (Cav). The chain is U-reduvitoxin-Pr1a from Platymeris rhadamanthus (Red spot assassin bug).